The following is a 253-amino-acid chain: UDP-Glc:alpha-D-GlcNAc-diphosphoundecaprenol beta-1,3-glucosyltransferase WfgD (253 aa).

This sequence belongs to the glycosyltransferase 2 family. Mn(2+) is required as a cofactor. Requires Mg(2+) as cofactor.

The protein resides in the cell inner membrane. It carries out the reaction N-acetyl-alpha-D-glucosaminyl-di-trans,octa-cis-undecaprenyl diphosphate + UDP-alpha-D-glucose = beta-D-Glc-(1-&gt;3)-alpha-D-GlcNAc-di-trans,octa-cis-undecaprenyl diphosphate + UDP + H(+). It participates in bacterial outer membrane biogenesis; lipopolysaccharide biosynthesis. Its function is as follows. Catalyzes the addition of Glc, the second sugar moiety of the O152-antigen repeating unit, to GlcNAc-pyrophosphate-undecaprenol. The chain is UDP-Glc:alpha-D-GlcNAc-diphosphoundecaprenol beta-1,3-glucosyltransferase WfgD (wfgD) from Escherichia coli.